A 964-amino-acid chain; its full sequence is Protein translocase subunit SecA (964 aa).

Residues Gln86, 104-108, and Asp494 each bind ATP; that span reads GEGKT. A disordered region spans residues 848 to 964; sequence AESADTIAVA…YKMCHGQNEK (117 aa). Acidic residues predominate over residues 871-882; that stretch reads AEGEVEEEDEDT. A compositionally biased stretch (low complexity) spans 889 to 900; that stretch reads AESAAASGAGES. Positions 947, 949, 958, and 959 each coordinate Zn(2+).

Belongs to the SecA family. Monomer and homodimer. Part of the essential Sec protein translocation apparatus which comprises SecA, SecYEG and auxiliary proteins SecDF. Other proteins may also be involved. Zn(2+) serves as cofactor.

The protein localises to the cell membrane. The protein resides in the cytoplasm. The enzyme catalyses ATP + H2O + cellular proteinSide 1 = ADP + phosphate + cellular proteinSide 2.. In terms of biological role, part of the Sec protein translocase complex. Interacts with the SecYEG preprotein conducting channel. Has a central role in coupling the hydrolysis of ATP to the transfer of proteins into and across the cell membrane, serving as an ATP-driven molecular motor driving the stepwise translocation of polypeptide chains across the membrane. The protein is Protein translocase subunit SecA of Bifidobacterium longum (strain DJO10A).